A 466-amino-acid chain; its full sequence is UDP-glycosyltransferase 79 (466 aa).

The active-site Proton acceptor is the H27. H27 contacts UDP-alpha-D-glucose. Catalysis depends on D120, which acts as the Charge relay. 11 residues coordinate UDP-alpha-D-glucose: S142, T291, F343, C344, H361, W364, N365, S366, E369, D385, and Q386. Residues T291, F343, C344, and H361 each contribute to the UDP site. The UDP site is built by N365, S366, and E369.

This sequence belongs to the UDP-glycosyltransferase family.

Functionally, involved in the detoxification of the Fusarium mycotoxin deoxynivalenol by the transfer of glucose from UDP-D-glucose to the hydroxyl group at C-3, forming deoxynivalenol-3-O-beta-D-glucoside. This chain is UDP-glycosyltransferase 79, found in Oryza sativa subsp. japonica (Rice).